A 196-amino-acid chain; its full sequence is ATP-dependent Clp protease proteolytic subunit (196 aa).

The active-site Nucleophile is S96. H121 is a catalytic residue.

Belongs to the peptidase S14 family. As to quaternary structure, fourteen ClpP subunits assemble into 2 heptameric rings which stack back to back to give a disk-like structure with a central cavity, resembling the structure of eukaryotic proteasomes.

The protein localises to the cytoplasm. It carries out the reaction Hydrolysis of proteins to small peptides in the presence of ATP and magnesium. alpha-casein is the usual test substrate. In the absence of ATP, only oligopeptides shorter than five residues are hydrolyzed (such as succinyl-Leu-Tyr-|-NHMec, and Leu-Tyr-Leu-|-Tyr-Trp, in which cleavage of the -Tyr-|-Leu- and -Tyr-|-Trp bonds also occurs).. Functionally, cleaves peptides in various proteins in a process that requires ATP hydrolysis. Has a chymotrypsin-like activity. Plays a major role in the degradation of misfolded proteins. The chain is ATP-dependent Clp protease proteolytic subunit from Streptococcus agalactiae serotype III (strain NEM316).